A 440-amino-acid chain; its full sequence is Xylose isomerase (440 aa).

Catalysis depends on residues H100 and D103. Residues E231, E267, H270, D295, D306, D308, and D338 each contribute to the Mg(2+) site.

Belongs to the xylose isomerase family. In terms of assembly, homotetramer. It depends on Mg(2+) as a cofactor.

It localises to the cytoplasm. It catalyses the reaction alpha-D-xylose = alpha-D-xylulofuranose. The chain is Xylose isomerase from Burkholderia multivorans (strain ATCC 17616 / 249).